The sequence spans 101 residues: Large ribosomal subunit protein uL24 (101 aa).

This sequence belongs to the universal ribosomal protein uL24 family. Part of the 50S ribosomal subunit.

One of two assembly initiator proteins, it binds directly to the 5'-end of the 23S rRNA, where it nucleates assembly of the 50S subunit. Its function is as follows. One of the proteins that surrounds the polypeptide exit tunnel on the outside of the subunit. The sequence is that of Large ribosomal subunit protein uL24 from Lactococcus lactis subsp. lactis (strain IL1403) (Streptococcus lactis).